The primary structure comprises 614 residues: 1-deoxy-D-xylulose-5-phosphate synthase (614 aa).

Thiamine diphosphate-binding positions include His-74 and 115-117; that span reads GHS. Asp-146 is a Mg(2+) binding site. Thiamine diphosphate-binding positions include 147 to 148, Asn-175, Tyr-282, and Glu-363; that span reads GA. Asn-175 provides a ligand contact to Mg(2+).

It belongs to the transketolase family. DXPS subfamily. Homodimer. The cofactor is Mg(2+). Thiamine diphosphate serves as cofactor.

It catalyses the reaction D-glyceraldehyde 3-phosphate + pyruvate + H(+) = 1-deoxy-D-xylulose 5-phosphate + CO2. Its pathway is metabolic intermediate biosynthesis; 1-deoxy-D-xylulose 5-phosphate biosynthesis; 1-deoxy-D-xylulose 5-phosphate from D-glyceraldehyde 3-phosphate and pyruvate: step 1/1. In terms of biological role, catalyzes the acyloin condensation reaction between C atoms 2 and 3 of pyruvate and glyceraldehyde 3-phosphate to yield 1-deoxy-D-xylulose-5-phosphate (DXP). This is 1-deoxy-D-xylulose-5-phosphate synthase from Methylobacillus flagellatus (strain ATCC 51484 / DSM 6875 / VKM B-1610 / KT).